Consider the following 403-residue polypeptide: DNA primase DnaG (403 aa).

Positions 172-248 (DSVIIVEGRA…HIDYIARAPP (77 aa)) constitute a Toprim domain. Mg(2+)-binding residues include glutamate 178, aspartate 222, and aspartate 224. Positions 279 to 300 (AAGEKTEAPAQPTQQQPPPAEA) are disordered.

The protein belongs to the archaeal DnaG primase family. As to quaternary structure, forms a ternary complex with MCM helicase and DNA. Component of the archaeal exosome complex. Mg(2+) is required as a cofactor.

It carries out the reaction ssDNA + n NTP = ssDNA/pppN(pN)n-1 hybrid + (n-1) diphosphate.. In terms of biological role, RNA polymerase that catalyzes the synthesis of short RNA molecules used as primers for DNA polymerase during DNA replication. Also part of the exosome, which is a complex involved in RNA degradation. Acts as a poly(A)-binding protein that enhances the interaction between heteromeric, adenine-rich transcripts and the exosome. The polypeptide is DNA primase DnaG (Pyrobaculum neutrophilum (strain DSM 2338 / JCM 9278 / NBRC 100436 / V24Sta) (Thermoproteus neutrophilus)).